The following is a 214-amino-acid chain: Heat shock 70 kDa protein cognate 1 (214 aa).

It belongs to the heat shock protein 70 family.

This is Heat shock 70 kDa protein cognate 1 (Hsc70-1) from Drosophila simulans (Fruit fly).